We begin with the raw amino-acid sequence, 619 residues long: Dihydroxy-acid dehydratase 1 (619 aa).

A Mg(2+)-binding site is contributed by Asp-81. Cys-122 serves as a coordination point for [2Fe-2S] cluster. Positions 123 and 124 each coordinate Mg(2+). N6-carboxylysine is present on Lys-124. [2Fe-2S] cluster is bound at residue Cys-198. Residue Glu-494 participates in Mg(2+) binding. The active-site Proton acceptor is Ser-520.

This sequence belongs to the IlvD/Edd family. As to quaternary structure, homodimer. [2Fe-2S] cluster serves as cofactor. Mg(2+) is required as a cofactor.

The enzyme catalyses (2R)-2,3-dihydroxy-3-methylbutanoate = 3-methyl-2-oxobutanoate + H2O. It catalyses the reaction (2R,3R)-2,3-dihydroxy-3-methylpentanoate = (S)-3-methyl-2-oxopentanoate + H2O. The protein operates within amino-acid biosynthesis; L-isoleucine biosynthesis; L-isoleucine from 2-oxobutanoate: step 3/4. It participates in amino-acid biosynthesis; L-valine biosynthesis; L-valine from pyruvate: step 3/4. Its function is as follows. Functions in the biosynthesis of branched-chain amino acids. Catalyzes the dehydration of (2R,3R)-2,3-dihydroxy-3-methylpentanoate (2,3-dihydroxy-3-methylvalerate) into 2-oxo-3-methylpentanoate (2-oxo-3-methylvalerate) and of (2R)-2,3-dihydroxy-3-methylbutanoate (2,3-dihydroxyisovalerate) into 2-oxo-3-methylbutanoate (2-oxoisovalerate), the penultimate precursor to L-isoleucine and L-valine, respectively. The protein is Dihydroxy-acid dehydratase 1 of Bordetella pertussis (strain Tohama I / ATCC BAA-589 / NCTC 13251).